The following is a 346-amino-acid chain: Elongation factor Ts (346 aa).

Residues 80-83 (TDFV) form an involved in Mg(2+) ion dislocation from EF-Tu region.

It belongs to the EF-Ts family.

It localises to the cytoplasm. In terms of biological role, associates with the EF-Tu.GDP complex and induces the exchange of GDP to GTP. It remains bound to the aminoacyl-tRNA.EF-Tu.GTP complex up to the GTP hydrolysis stage on the ribosome. In Streptococcus pyogenes serotype M1, this protein is Elongation factor Ts.